The primary structure comprises 111 residues: HTH-type transcriptional regulator SinR (111 aa).

An HTH cro/C1-type domain is found at 6-61 (IKQYRKEKGYSLSELAEKAGVAKSYLSSIERNLQTNPSIQFLEKVSAVLDVSVHTL). Positions 17–36 (LSELAEKAGVAKSYLSSIER) form a DNA-binding region, H-T-H motif. The 39-residue stretch at 65 to 103 (KHETEYDGQLDSEWEKLVRDAMTSGVSKKQFREFLDYQK) folds into the Sin domain.

As to quaternary structure, homotetramer in the absence of SinI. Heterodimer with SinI. Interaction with SinI disrupts the SinR tetramer and its repressor activity. Interacts with hpr.

In terms of biological role, negative as well as positive regulator of alternate developmental processes that are induced at the end of vegetative growth in response to nutrient depletion. Binds to the alkaline protease (aprE) gene at two sites. Also acts as a repressor of the key sporulation gene spo0A. Negatively regulates transcription of the eps operon, which is responsible for the biosynthesis of an exopolysaccharide involved in biofilm formation; therefore it could govern the transition between a state in which bacteria swim or swarm and a state in which bacteria assemble into multicellular communities. Acts with Hpr as a corepressor of epr expression. Also negatively regulates transcription of the lutABC operon, which is required for lactate utilization. Repressor activity is regulated by SinI. In Bacillus subtilis (strain 168), this protein is HTH-type transcriptional regulator SinR (sinR).